Consider the following 439-residue polypeptide: Beta-1,3-galactosyl-O-glycosyl-glycoprotein beta-1,6-N-acetylglucosaminyltransferase (439 aa).

Topologically, residues 1–11 (MVGWKKKKLCR) are cytoplasmic. The helical; Signal-anchor for type II membrane protein transmembrane segment at 12–29 (GHHLWVLGCYMLLAVVSL) threads the bilayer. Topologically, residues 30–439 (RLSLRFKCDV…RHKAIYGTEL (410 aa)) are lumenal. N-linked (GlcNAc...) asparagine; by host glycans are attached at residues N71 and N107. Cystine bridges form between C72-C229, C163-C383, C184-C211, and C392-C424.

Belongs to the glycosyltransferase 14 family.

It is found in the host Golgi apparatus membrane. The enzyme catalyses a 3-O-[beta-D-galactosyl-(1-&gt;3)-N-acetyl-alpha-D-galactosaminyl]-L-seryl-[protein] + UDP-N-acetyl-alpha-D-glucosamine = 3-O-{beta-D-galactosyl-(1-&gt;3)-[N-acetyl-beta-D-glucosaminyl-(1-&gt;6)]-N-acetyl-alpha-D-galactosaminyl}-L-seryl-[protein] + UDP + H(+). It catalyses the reaction a 3-O-[beta-D-galactosyl-(1-&gt;3)-N-acetyl-alpha-D-galactosaminyl]-L-threonyl-[protein] + UDP-N-acetyl-alpha-D-glucosamine = a 3-O-{beta-D-galactosyl-(1-&gt;3)-[N-acetyl-beta-D-glucosaminyl-(1-&gt;6)]-N-acetyl-alpha-D-galactosaminyl}-L-threonyl-[protein] + UDP + H(+). It carries out the reaction a beta-D-Gal-(1-&gt;4)-beta-D-GlcNAc-(1-&gt;3)-beta-D-Gal-(1-&gt;4)-beta-D-GlcNAc derivative + UDP-N-acetyl-alpha-D-glucosamine = a beta-D-Gal-(1-&gt;4)-beta-D-GlcNAc-(1-&gt;3)-[beta-D-GlcNAc-(1-&gt;6)]-beta-D-Gal-(1-&gt;4)-N-acetyl-beta-D-glucosaminyl derivative + UDP + H(+). The catalysed reaction is 3-O-[N-acetyl-beta-D-glucosaminyl-(1-&gt;3)-N-acetyl-alpha-D-galactosaminyl]-L-seryl-[protein] + UDP-N-acetyl-alpha-D-glucosamine = 3-O-[N-acetyl-beta-D-glucosaminyl-(1-&gt;3)-[N-acetyl-beta-D-glucosaminyl-(1-&gt;6)]-N-acetyl-alpha-D-galactosaminyl]-L-seryl-[protein] + UDP + H(+). The enzyme catalyses a 3-O-[N-acetyl-beta-D-glucosaminyl-(1-&gt;3)-N-acetyl-alpha-D-galactosaminyl]-L-threonyl-[protein] + UDP-N-acetyl-alpha-D-glucosamine = 3-O-[N-acetyl-beta-D-glucosaminyl-(1-&gt;3)-[N-acetyl-beta-D-glucosaminyl-(1-&gt;6)]-N-acetyl-alpha-D-galactosaminyl]-L-threonyl-[protein] + UDP + H(+). The protein operates within protein modification; protein glycosylation. Functionally, non-essential glycosyltransferase that can synthesize all known mucin beta 6 N-acetylglucosaminides. Mediates core 2 and core 4 O-glycan branching, 2 important steps in mucin-type biosynthesis. Has also I-branching enzyme activity by converting linear into branched poly-N-acetyllactosaminoglycans. Contributes to the post-translational modifications of structural proteins. The sequence is that of Beta-1,3-galactosyl-O-glycosyl-glycoprotein beta-1,6-N-acetylglucosaminyltransferase (Bo17) from Bovine herpesvirus 4 (BoHV-4).